Consider the following 96-residue polypeptide: Small ribosomal subunit protein bS6 (96 aa).

This sequence belongs to the bacterial ribosomal protein bS6 family.

Its function is as follows. Binds together with bS18 to 16S ribosomal RNA. This Streptomyces coelicolor (strain ATCC BAA-471 / A3(2) / M145) protein is Small ribosomal subunit protein bS6 (rpsF).